The chain runs to 251 residues: Aspartate/glutamate leucyltransferase (251 aa).

It belongs to the R-transferase family. Bpt subfamily.

It is found in the cytoplasm. The catalysed reaction is N-terminal L-glutamyl-[protein] + L-leucyl-tRNA(Leu) = N-terminal L-leucyl-L-glutamyl-[protein] + tRNA(Leu) + H(+). The enzyme catalyses N-terminal L-aspartyl-[protein] + L-leucyl-tRNA(Leu) = N-terminal L-leucyl-L-aspartyl-[protein] + tRNA(Leu) + H(+). Its function is as follows. Functions in the N-end rule pathway of protein degradation where it conjugates Leu from its aminoacyl-tRNA to the N-termini of proteins containing an N-terminal aspartate or glutamate. This Xanthomonas oryzae pv. oryzae (strain KACC10331 / KXO85) protein is Aspartate/glutamate leucyltransferase.